A 319-amino-acid chain; its full sequence is ATP-dependent 6-phosphofructokinase (319 aa).

G11 serves as a coordination point for ATP. 21-25 (RAVVR) provides a ligand contact to ADP. ATP contacts are provided by residues 72–73 (RC) and 102–105 (GDGS). D103 provides a ligand contact to Mg(2+). 125–127 (TID) contributes to the substrate binding site. The active-site Proton acceptor is D127. R154 serves as a coordination point for ADP. 169–171 (MGR) contacts substrate. ADP contacts are provided by residues 185 to 187 (GAE), R211, and 213 to 215 (KKH). Residues E222, R243, and 249 to 252 (HIQR) each bind substrate.

It belongs to the phosphofructokinase type A (PFKA) family. ATP-dependent PFK group I subfamily. Prokaryotic clade 'B1' sub-subfamily. As to quaternary structure, homotetramer. Requires Mg(2+) as cofactor.

The protein resides in the cytoplasm. The catalysed reaction is beta-D-fructose 6-phosphate + ATP = beta-D-fructose 1,6-bisphosphate + ADP + H(+). It participates in carbohydrate degradation; glycolysis; D-glyceraldehyde 3-phosphate and glycerone phosphate from D-glucose: step 3/4. With respect to regulation, allosterically activated by ADP and other diphosphonucleosides, and allosterically inhibited by phosphoenolpyruvate. In terms of biological role, catalyzes the phosphorylation of D-fructose 6-phosphate to fructose 1,6-bisphosphate by ATP, the first committing step of glycolysis. The sequence is that of ATP-dependent 6-phosphofructokinase from Lysinibacillus sphaericus (Bacillus sphaericus).